Consider the following 712-residue polypeptide: Zinc finger and BTB domain-containing protein 39 (712 aa).

The BTB domain maps to 30–96 (CDVTIVVGSR…VYTSELFTDL (67 aa)). 3 disordered regions span residues 129 to 162 (ARAKPLTSTSESHSGTLSCPSAEPAHPLGELRGG), 176 to 224 (SDAG…IPSM), and 236 to 260 (GIQTSTSSCQPYKVQSNGDFSKNSF). Polar residues predominate over residues 134-147 (LTSTSESHSGTLSC). Lys-183 participates in a covalent cross-link: Glycyl lysine isopeptide (Lys-Gly) (interchain with G-Cter in SUMO2). Residues 372 to 394 (GNCKVCETHFQDRNSRVTHVLSH) form a C2H2-type 1 zinc finger. The segment at 400–422 (FSCDMCETKFFTQWQLTLHRRDG) adopts a C2H2-type 2; atypical zinc-finger fold. Lys-439 is covalently cross-linked (Glycyl lysine isopeptide (Lys-Gly) (interchain with G-Cter in SUMO2)). The C2H2-type 3; atypical zinc finger occupies 480–502 (QACSVCDQRHLNLCSLMWHTLSH). 4 consecutive C2H2-type zinc fingers follow at residues 508-530 (FSCSVCANSFVDWHLLEKHMAVH), 538-560 (FHCRLCSQSFKSEAAYRYHVSQH), 605-627 (YSCKVCGKRFAHTSEFNYHRRIH), and 633-655 (YQCKVCHKFFRGRSTIKCHLKTH). Residues 661-683 (YRCTVCGHYSSTLNLMSKHVGVH) form a C2H2-type 8; atypical zinc finger.

It belongs to the krueppel C2H2-type zinc-finger protein family.

Its subcellular location is the nucleus. Its function is as follows. May be involved in transcriptional regulation. The chain is Zinc finger and BTB domain-containing protein 39 (ZBTB39) from Homo sapiens (Human).